The primary structure comprises 301 residues: Probable 2-oxoglutarate-dependent dioxygenase AOP1 (301 aa).

Positions Thr-158–Pro-262 constitute a Fe2OG dioxygenase domain. His-186, Asp-188, and His-243 together coordinate Fe cation. 2-oxoglutarate is bound at residue Arg-253.

Belongs to the iron/ascorbate-dependent oxidoreductase family. Fe(2+) is required as a cofactor.

Probable 2-oxoglutarate-dependent dioxygenase that may be involved in glucosinolates biosynthesis. May play a role in the production of aliphatic glucosinolates. The chain is Probable 2-oxoglutarate-dependent dioxygenase AOP1 (AOP1) from Arabidopsis thaliana (Mouse-ear cress).